The chain runs to 916 residues: Nonsense-mediated mRNA decay factor SMG8 (916 aa).

The interval 566-626 (LENSNRTPDT…KNYASQGDAD (61 aa)) is disordered. Positions 589–604 (LSGSQKSQDSASNLTF) are enriched in polar residues.

Belongs to the SMG8 family.

Involved in nonsense-mediated decay (NMD) of mRNAs containing premature stop codons. Probable component of kinase complex containing SMG1 and recruited to stalled ribosomes. The sequence is that of Nonsense-mediated mRNA decay factor SMG8 from Aedes aegypti (Yellowfever mosquito).